A 224-amino-acid chain; its full sequence is Ribonuclease 3 (224 aa).

In terms of domain architecture, RNase III spans 4 to 127; that stretch reads YSKLEKCLDY…IMGAIYLESG (124 aa). Glu-40 is a Mg(2+) binding site. Residue Asp-44 is part of the active site. Mg(2+) is bound by residues Asp-113 and Glu-116. The active site involves Glu-116. Positions 154 to 223 constitute a DRBM domain; that stretch reads DYKTALQEIT…AKIAIDKLKE (70 aa).

It belongs to the ribonuclease III family. In terms of assembly, homodimer. The cofactor is Mg(2+).

It localises to the cytoplasm. The catalysed reaction is Endonucleolytic cleavage to 5'-phosphomonoester.. In terms of biological role, digests double-stranded RNA. Involved in the processing of primary rRNA transcript to yield the immediate precursors to the large and small rRNAs (23S and 16S). Processes some mRNAs, and tRNAs when they are encoded in the rRNA operon. Processes pre-crRNA and tracrRNA of type II CRISPR loci if present in the organism. The sequence is that of Ribonuclease 3 from Aliarcobacter butzleri (strain RM4018) (Arcobacter butzleri).